The primary structure comprises 363 residues: UDP-N-acetylglucosamine--N-acetylmuramyl-(pentapeptide) pyrophosphoryl-undecaprenol N-acetylglucosamine transferase (363 aa).

UDP-N-acetyl-alpha-D-glucosamine is bound by residues 15–17, Asn-127, Arg-163, Ser-191, Ile-244, 263–268, and Gln-288; these read TGG and ALTVSE.

This sequence belongs to the glycosyltransferase 28 family. MurG subfamily.

The protein localises to the cell inner membrane. The enzyme catalyses di-trans,octa-cis-undecaprenyl diphospho-N-acetyl-alpha-D-muramoyl-L-alanyl-D-glutamyl-meso-2,6-diaminopimeloyl-D-alanyl-D-alanine + UDP-N-acetyl-alpha-D-glucosamine = di-trans,octa-cis-undecaprenyl diphospho-[N-acetyl-alpha-D-glucosaminyl-(1-&gt;4)]-N-acetyl-alpha-D-muramoyl-L-alanyl-D-glutamyl-meso-2,6-diaminopimeloyl-D-alanyl-D-alanine + UDP + H(+). It functions in the pathway cell wall biogenesis; peptidoglycan biosynthesis. Cell wall formation. Catalyzes the transfer of a GlcNAc subunit on undecaprenyl-pyrophosphoryl-MurNAc-pentapeptide (lipid intermediate I) to form undecaprenyl-pyrophosphoryl-MurNAc-(pentapeptide)GlcNAc (lipid intermediate II). This is UDP-N-acetylglucosamine--N-acetylmuramyl-(pentapeptide) pyrophosphoryl-undecaprenol N-acetylglucosamine transferase from Pectobacterium carotovorum subsp. carotovorum (strain PC1).